A 2135-amino-acid chain; its full sequence is Plexin-B1 (2135 aa).

Positions 1 to 19 (MPALGPALLQALWAGWVLT) are cleaved as a signal peptide. The Sema domain occupies 20 to 479 (LQPLPPTAFT…TQSTLLKVPV (460 aa)). Residues 20 to 1490 (LQPLPPTAFT…SPGAFPVAAQ (1471 aa)) lie on the Extracellular side of the membrane. The N-linked (GlcNAc...) asparagine glycan is linked to N31. Cystine bridges form between C79–C88, C111–C119, C252–C377, C268–C322, C340–C364, C482–C499, C488–C533, C491–C508, and C502–C514. N-linked (GlcNAc...) asparagine glycosylation occurs at N334. N543 carries N-linked (GlcNAc...) asparagine glycosylation. The cysteines at positions 570 and 588 are disulfide-linked. Disordered stretches follow at residues 671–829 (MVAS…TTFP) and 849–884 (LPEADEWTGGDAPAFSTSTLLSGDGDSAELEGPPAP). Pro residues predominate over residues 681–697 (SPDPPARGGPSPSPPTA). Composition is skewed to low complexity over residues 698–710 (PKALATPAPDTLP) and 734–754 (SPWGPWAGSGSISSPGSTGSP). IPT/TIG domains follow at residues 1070–1160 (PLIH…FAYQ), 1162–1249 (PKVH…FKYT), and 1252–1375 (PNIT…FSYE). N-linked (GlcNAc...) asparagine glycosylation is found at N1183, N1253, and N1330. A helical transmembrane segment spans residues 1491–1511 (VGLGVGTSLLALGVIIIVLMY). Residues 1507–1539 (IVLMYRRKSKQALRDYKKVQIQLENLESSVRDR) adopt a coiled-coil conformation. Residues 1512–2135 (RRKSKQALRD…AAVENKVTDL (624 aa)) are Cytoplasmic-facing. A disordered region spans residues 1883–1908 (PWHLVKPSDEPEPPRPRRGSLRGGER). Over residues 1888-1897 (KPSDEPEPPR) the composition is skewed to basic and acidic residues.

The protein belongs to the plexin family. Monomer, and heterodimer with PLXNB2 after proteolytic processing. Binds RAC1 that has been activated by GTP binding. Interaction with SEMA4D promotes binding of cytoplasmic ligands. Interacts with PLXNA1. Interacts with ARHGEF11 and ARHGEF12. Interacts with ERBB2. Interacts with MET. Interacts with MST1R. Interacts with RRAS. Interacts with RHOD. Interacts with RND1. Interacts with NRP1 and NRP2. Phosphorylated on tyrosine residues by ERBB2 and MET upon SEMA4D binding. Post-translationally, proteolytic processing favors heterodimerization with PLXNB2 and SEMA4D binding. As to expression, highly expressed in fetal kidney, and at slightly lower levels in fetal brain, lung and liver.

Its subcellular location is the cell membrane. It is found in the secreted. Its function is as follows. Receptor for SEMA4D. Plays a role in GABAergic synapse development. Mediates SEMA4A- and SEMA4D-dependent inhibitory synapse development. Plays a role in RHOA activation and subsequent changes of the actin cytoskeleton. Plays a role in axon guidance, invasive growth and cell migration. In Homo sapiens (Human), this protein is Plexin-B1 (PLXNB1).